Reading from the N-terminus, the 159-residue chain is Ribosomal RNA large subunit methyltransferase H (159 aa).

S-adenosyl-L-methionine contacts are provided by residues Leu76, Gly108, and 127–132 (FGLLTF).

The protein belongs to the RNA methyltransferase RlmH family. Homodimer.

The protein localises to the cytoplasm. It catalyses the reaction pseudouridine(1915) in 23S rRNA + S-adenosyl-L-methionine = N(3)-methylpseudouridine(1915) in 23S rRNA + S-adenosyl-L-homocysteine + H(+). Functionally, specifically methylates the pseudouridine at position 1915 (m3Psi1915) in 23S rRNA. The sequence is that of Ribosomal RNA large subunit methyltransferase H from Streptococcus thermophilus (strain CNRZ 1066).